A 431-amino-acid chain; its full sequence is Glutamate-1-semialdehyde 2,1-aminomutase (431 aa).

K269 bears the N6-(pyridoxal phosphate)lysine mark.

This sequence belongs to the class-III pyridoxal-phosphate-dependent aminotransferase family. HemL subfamily. In terms of assembly, homodimer. Pyridoxal 5'-phosphate serves as cofactor.

The protein resides in the cytoplasm. It catalyses the reaction (S)-4-amino-5-oxopentanoate = 5-aminolevulinate. It functions in the pathway porphyrin-containing compound metabolism; protoporphyrin-IX biosynthesis; 5-aminolevulinate from L-glutamyl-tRNA(Glu): step 2/2. Its pathway is porphyrin-containing compound metabolism; chlorophyll biosynthesis. This Chlorobium luteolum (strain DSM 273 / BCRC 81028 / 2530) (Pelodictyon luteolum) protein is Glutamate-1-semialdehyde 2,1-aminomutase.